Here is a 164-residue protein sequence, read N- to C-terminus: Respiratory growth induced protein 2 (164 aa).

The protein belongs to the RGI1 family.

It is found in the cytoplasm. Involved in the control of energetic metabolism and significantly contribute to cell fitness, especially under respiratory growth conditions. This Saccharomyces cerevisiae (strain JAY291) (Baker's yeast) protein is Respiratory growth induced protein 2 (RGI2).